Consider the following 520-residue polypeptide: Tetratricopeptide repeat protein 6 (520 aa).

TPR repeat units lie at residues 57–90 (MTMC…ISHS), 101–138 (ADCL…DKNS), 139–172 (YTAF…DATE), 176–209 (LNTF…SRTN), 210–243 (GSLC…NPCF), 245–280 (DAYV…NPAY), 281–314 (IKAR…DPKN), 320–347 (GRAV…ISTT), 348–381 (AEFL…NPKY), 382–415 (SLAY…DPEN), 416–449 (EYVL…CPFW), 450–483 (AAVY…KPND), and 484–517 (ALVY…EDYA).

The chain is Tetratricopeptide repeat protein 6 from Homo sapiens (Human).